The sequence spans 258 residues: Dihydroorotate dehydrogenase B (NAD(+)), electron transfer subunit (258 aa).

An FAD-binding FR-type domain is found at 2 to 100; sequence ILKENLTVVS…LGPQGNGFDL (99 aa). FAD is bound by residues 51–54, 68–70, and 75–76; these read RPIS, IYR, and GT. The [2Fe-2S] cluster site is built by C220, C225, C228, and C244.

The protein belongs to the PyrK family. In terms of assembly, heterotetramer of 2 PyrK and 2 PyrD type B subunits. [2Fe-2S] cluster serves as cofactor. FAD is required as a cofactor.

It functions in the pathway pyrimidine metabolism; UMP biosynthesis via de novo pathway; orotate from (S)-dihydroorotate (NAD(+) route): step 1/1. In terms of biological role, responsible for channeling the electrons from the oxidation of dihydroorotate from the FMN redox center in the PyrD type B subunit to the ultimate electron acceptor NAD(+). This Streptococcus mutans serotype c (strain ATCC 700610 / UA159) protein is Dihydroorotate dehydrogenase B (NAD(+)), electron transfer subunit.